Consider the following 516-residue polypeptide: Probable malate:quinone oxidoreductase (516 aa).

Belongs to the MQO family. It depends on FAD as a cofactor.

The catalysed reaction is (S)-malate + a quinone = a quinol + oxaloacetate. The protein operates within carbohydrate metabolism; tricarboxylic acid cycle; oxaloacetate from (S)-malate (quinone route): step 1/1. The chain is Probable malate:quinone oxidoreductase from Mycobacterium sp. (strain MCS).